The following is a 225-amino-acid chain: PKHD-type hydroxylase YbiX (225 aa).

Residues 78–177 enclose the Fe2OG dioxygenase domain; sequence TLSTPLFNRY…RVASFMWIQS (100 aa). Positions 96, 98, and 158 each coordinate Fe cation. Arg168 contributes to the 2-oxoglutarate binding site.

The cofactor is Fe(2+). It depends on L-ascorbate as a cofactor.

This Escherichia coli (strain 55989 / EAEC) protein is PKHD-type hydroxylase YbiX.